A 372-amino-acid polypeptide reads, in one-letter code: Cell division protein FtsZ 1 (372 aa).

Residues 51-55 (GAGCN), 138-140 (GTG), Glu-169, Arg-173, and Asp-216 each bind GTP. Positions 351 to 372 (QEETPEPSEEEVPPVKIDIPEL) are disordered. The span at 353-362 (ETPEPSEEEV) shows a compositional bias: acidic residues.

The protein belongs to the FtsZ family. Homodimer. Polymerizes to form a dynamic ring structure in a strictly GTP-dependent manner. Interacts directly with several other division proteins.

The protein resides in the cytoplasm. Essential cell division protein that forms a contractile ring structure (Z ring) at the future cell division site. The regulation of the ring assembly controls the timing and the location of cell division. One of the functions of the FtsZ ring is to recruit other cell division proteins to the septum to produce a new cell wall between the dividing cells. Binds GTP and shows GTPase activity. This Pyrococcus abyssi (strain GE5 / Orsay) protein is Cell division protein FtsZ 1.